Reading from the N-terminus, the 186-residue chain is ATP synthase subunit delta (186 aa).

It belongs to the ATPase delta chain family. In terms of assembly, F-type ATPases have 2 components, F(1) - the catalytic core - and F(0) - the membrane proton channel. F(1) has five subunits: alpha(3), beta(3), gamma(1), delta(1), epsilon(1). F(0) has three main subunits: a(1), b(2) and c(10-14). The alpha and beta chains form an alternating ring which encloses part of the gamma chain. F(1) is attached to F(0) by a central stalk formed by the gamma and epsilon chains, while a peripheral stalk is formed by the delta and b chains.

Its subcellular location is the cell membrane. Functionally, f(1)F(0) ATP synthase produces ATP from ADP in the presence of a proton or sodium gradient. F-type ATPases consist of two structural domains, F(1) containing the extramembraneous catalytic core and F(0) containing the membrane proton channel, linked together by a central stalk and a peripheral stalk. During catalysis, ATP synthesis in the catalytic domain of F(1) is coupled via a rotary mechanism of the central stalk subunits to proton translocation. In terms of biological role, this protein is part of the stalk that links CF(0) to CF(1). It either transmits conformational changes from CF(0) to CF(1) or is implicated in proton conduction. This chain is ATP synthase subunit delta, found in Mycoplasmopsis agalactiae (strain NCTC 10123 / CIP 59.7 / PG2) (Mycoplasma agalactiae).